The following is a 184-amino-acid chain: Putative axial regulator YABBY 2 (184 aa).

A C4-type zinc finger spans residues 15-42; the sequence is CSFCTTILAVSVPYASLFTLVTVRCGHC. 2 stretches are compositionally biased toward polar residues: residues 76–94 and 171–184; these read LVTR…NLSE and LDQS…NGYY. 2 disordered regions span residues 76-115 and 162-184; these read LVTR…RQRV and LDGN…NGYY.

It belongs to the YABBY family. As to quaternary structure, interacts with SPL/NZZ and SPEAR2. Expressed at low levels in abaxial regions of lateral aerial organ primordia leading to cotyledons, leaves, flower meristems, sepals, petals, stamen and carpels, but not in roots.

The protein resides in the nucleus. Functionally, involved in the abaxial cell fate determination during embryogenesis and organogenesis. This is Putative axial regulator YABBY 2 (YAB2) from Arabidopsis thaliana (Mouse-ear cress).